The primary structure comprises 160 residues: 6,7-dimethyl-8-ribityllumazine synthase (160 aa).

Residues Trp27, 59 to 61 (AIE), and 81 to 83 (VVI) each bind 5-amino-6-(D-ribitylamino)uracil. 86–87 (QT) is a (2S)-2-hydroxy-3-oxobutyl phosphate binding site. Catalysis depends on His89, which acts as the Proton donor. Asn114 lines the 5-amino-6-(D-ribitylamino)uracil pocket. Position 128 (Arg128) interacts with (2S)-2-hydroxy-3-oxobutyl phosphate.

This sequence belongs to the DMRL synthase family. As to quaternary structure, homopentamer.

The catalysed reaction is (2S)-2-hydroxy-3-oxobutyl phosphate + 5-amino-6-(D-ribitylamino)uracil = 6,7-dimethyl-8-(1-D-ribityl)lumazine + phosphate + 2 H2O + H(+). The protein operates within cofactor biosynthesis; riboflavin biosynthesis; riboflavin from 2-hydroxy-3-oxobutyl phosphate and 5-amino-6-(D-ribitylamino)uracil: step 1/2. Functionally, catalyzes the formation of 6,7-dimethyl-8-ribityllumazine by condensation of 5-amino-6-(D-ribitylamino)uracil with 3,4-dihydroxy-2-butanone 4-phosphate. This is the penultimate step in the biosynthesis of riboflavin. The chain is 6,7-dimethyl-8-ribityllumazine synthase from Mycobacterium avium (strain 104).